A 276-amino-acid polypeptide reads, in one-letter code: Bis(5'-nucleosyl)-tetraphosphatase, symmetrical (276 aa).

It belongs to the Ap4A hydrolase family.

The enzyme catalyses P(1),P(4)-bis(5'-adenosyl) tetraphosphate + H2O = 2 ADP + 2 H(+). Hydrolyzes diadenosine 5',5'''-P1,P4-tetraphosphate to yield ADP. This Legionella pneumophila subsp. pneumophila (strain Philadelphia 1 / ATCC 33152 / DSM 7513) protein is Bis(5'-nucleosyl)-tetraphosphatase, symmetrical.